The sequence spans 670 residues: UvrABC system protein B (670 aa).

In terms of domain architecture, Helicase ATP-binding spans asparagine 28–isoleucine 414. Residue glycine 41–threonine 48 coordinates ATP. Positions tyrosine 94–isoleucine 117 match the Beta-hairpin motif. Residues glutamine 432–isoleucine 594 enclose the Helicase C-terminal domain. In terms of domain architecture, UVR spans asparagine 631–lysine 666.

It belongs to the UvrB family. Forms a heterotetramer with UvrA during the search for lesions. Interacts with UvrC in an incision complex.

The protein localises to the cytoplasm. In terms of biological role, the UvrABC repair system catalyzes the recognition and processing of DNA lesions. A damage recognition complex composed of 2 UvrA and 2 UvrB subunits scans DNA for abnormalities. Upon binding of the UvrA(2)B(2) complex to a putative damaged site, the DNA wraps around one UvrB monomer. DNA wrap is dependent on ATP binding by UvrB and probably causes local melting of the DNA helix, facilitating insertion of UvrB beta-hairpin between the DNA strands. Then UvrB probes one DNA strand for the presence of a lesion. If a lesion is found the UvrA subunits dissociate and the UvrB-DNA preincision complex is formed. This complex is subsequently bound by UvrC and the second UvrB is released. If no lesion is found, the DNA wraps around the other UvrB subunit that will check the other stand for damage. This Onion yellows phytoplasma (strain OY-M) protein is UvrABC system protein B.